A 226-amino-acid polypeptide reads, in one-letter code: Enolase-phosphatase E1 (226 aa).

It belongs to the HAD-like hydrolase superfamily. MasA/MtnC family. In terms of assembly, monomer. It depends on Mg(2+) as a cofactor.

It catalyses the reaction 5-methylsulfanyl-2,3-dioxopentyl phosphate + H2O = 1,2-dihydroxy-5-(methylsulfanyl)pent-1-en-3-one + phosphate. It participates in amino-acid biosynthesis; L-methionine biosynthesis via salvage pathway; L-methionine from S-methyl-5-thio-alpha-D-ribose 1-phosphate: step 3/6. It functions in the pathway amino-acid biosynthesis; L-methionine biosynthesis via salvage pathway; L-methionine from S-methyl-5-thio-alpha-D-ribose 1-phosphate: step 4/6. In terms of biological role, bifunctional enzyme that catalyzes the enolization of 2,3-diketo-5-methylthiopentyl-1-phosphate (DK-MTP-1-P) into the intermediate 2-hydroxy-3-keto-5-methylthiopentenyl-1-phosphate (HK-MTPenyl-1-P), which is then dephosphorylated to form the acireductone 1,2-dihydroxy-3-keto-5-methylthiopentene (DHK-MTPene). In Shewanella sp. (strain MR-4), this protein is Enolase-phosphatase E1.